A 116-amino-acid chain; its full sequence is Flagellar transcriptional regulator FlhD (116 aa).

The protein belongs to the FlhD family. In terms of assembly, homodimer; disulfide-linked. Forms a heterohexamer composed of two FlhC and four FlhD subunits. Each FlhC binds a FlhD dimer, forming a heterotrimer, and a hexamer assembles by dimerization of two heterotrimers.

The protein localises to the cytoplasm. Its function is as follows. Functions in complex with FlhC as a master transcriptional regulator that regulates transcription of several flagellar and non-flagellar operons by binding to their promoter region. Activates expression of class 2 flagellar genes, including fliA, which is a flagellum-specific sigma factor that turns on the class 3 genes. Also regulates genes whose products function in a variety of physiological pathways. This chain is Flagellar transcriptional regulator FlhD, found in Pectobacterium carotovorum subsp. carotovorum (strain PC1).